The chain runs to 303 residues: MAHYHDNYGKNDEVEFVRTGYGKDMVKVLHIQRDGKYHSIKEVATSVQLTLRSKKDYLHGDNSDIIPTDTIKNTVHVLAKLRGIRNIETFAMNICEHFLSSFNHVTRAHVYVEEVPWKRFEKNGIKHVHAFIHTPTGTHFCEVEQMRNGPPVIHSGIKDLKVLKTTQSGFEGFLKDQFTTLPEVKDRCFATQVYCKWRYQRRDVDFEAIWGAVRDIVLQKFAGPYDKGEYSPSVQKTLYDIQVLSLSQLPEIEDMEISLPNIHYFNIDMSKMGLINKEEVLLPLDNPYGKITGTVKRKLPSRL.

The residue at position 2 (A2) is an N-acetylalanine. Residues K10 and K23 each carry the N6-acetyllysine; alternate modification. K10 and K23 each carry N6-succinyllysine; alternate. The active-site Charge relay system is K23. Residues K27 and K36 each carry the N6-acetyllysine modification. Phosphoserine occurs at positions 39 and 63. Residue T68 is the Charge relay system of the active site. The urate site is built by T68 and D69. Residues K118, K122, and K164 each carry the N6-acetyllysine modification. Residue F170 coordinates urate. N6-acetyllysine occurs at positions 175 and 185. Residue R187 coordinates urate. An N6-acetyllysine; alternate mark is found at K220 and K227. K220 and K227 each carry N6-succinyllysine; alternate. Phosphoserine is present on S231. V234, Q235, and N261 together coordinate urate. H263 acts as the Charge relay system in catalysis. K277 is subject to N6-acetyllysine. Y288 is modified (phosphotyrosine). Positions 301 to 303 match the Microbody targeting signal motif; the sequence is SRL.

Belongs to the uricase family. In terms of processing, acetylation of Lys-118, Lys-164 and Lys-290 is observed in liver mitochondria from fasted mice but not from fed mice. May be deacetylated by Sirt5; however it is unclear whether Sirt5 mediates deacetylation or desuccinylation of Uox; additional evidence is required to validate these results.

It localises to the peroxisome. Its subcellular location is the mitochondrion. The enzyme catalyses urate + O2 + H2O = 5-hydroxyisourate + H2O2. Its pathway is purine metabolism; urate degradation; (S)-allantoin from urate: step 1/3. Its function is as follows. Catalyzes the oxidation of uric acid to 5-hydroxyisourate, which is further processed to form (S)-allantoin. In Mus musculus (Mouse), this protein is Uricase (Uox).